A 208-amino-acid chain; its full sequence is Guanylate kinase (208 aa).

A Guanylate kinase-like domain is found at 4 to 185 (GNLYIISAPS…ALVDLEHILR (182 aa)). 11–18 (APSGAGKS) provides a ligand contact to ATP.

It belongs to the guanylate kinase family.

It is found in the cytoplasm. The catalysed reaction is GMP + ATP = GDP + ADP. Essential for recycling GMP and indirectly, cGMP. This is Guanylate kinase from Histophilus somni (strain 129Pt) (Haemophilus somnus).